Consider the following 95-residue polypeptide: Cytosolic calcium-binding protein 3 (95 aa).

6 consecutive repeat copies span residues 30–35 (VEDAEK), 39–43 (DEEEK), 54–59 (VEEEKK), 67–71 (PEEKK), 75–79 (LEEKQ), and 90–94 (VEKAK). The 6 X 5 AA approximate repeats of V-E-E-K-K stretch occupies residues 30–94 (VEDAEKTNED…AEEVAVEKAK (65 aa)). Residues 54 to 95 (VEEEKKAEEVTETPEEKKTEALEEKQTEVAAAEEVAVEKAKE) are disordered. Basic and acidic residues predominate over residues 55–80 (EEEKKAEEVTETPEEKKTEALEEKQT).

In terms of tissue distribution, low levels in roots (e.g. in cambium) and barely expressed in stems, shoots, flowers, siliques and leaves.

The protein localises to the cytoplasm. It is found in the cytosol. Its function is as follows. Binds calcium Ca(2+) and may act as a signal mediator to buffer Ca(2+). This chain is Cytosolic calcium-binding protein 3, found in Arabidopsis thaliana (Mouse-ear cress).